The following is a 231-amino-acid chain: Small ribosomal subunit protein uS3 (231 aa).

Residues 39–107 (IRKHIMKAIP…DVSLNIVEIR (69 aa)) enclose the KH type-2 domain.

Belongs to the universal ribosomal protein uS3 family. Part of the 30S ribosomal subunit. Forms a tight complex with proteins S10 and S14.

Its function is as follows. Binds the lower part of the 30S subunit head. Binds mRNA in the 70S ribosome, positioning it for translation. The polypeptide is Small ribosomal subunit protein uS3 (Rhizorhabdus wittichii (strain DSM 6014 / CCUG 31198 / JCM 15750 / NBRC 105917 / EY 4224 / RW1) (Sphingomonas wittichii)).